A 284-amino-acid chain; its full sequence is Large ribosomal subunit protein uL2 (284 aa).

Residues 232-284 are disordered; it reads RGTAMNPVDHPHGGGEGRHNGYIPRTPWGKVTKGLKTRDKRKSNKWIVKDRRK. The span at 240–250 shows a compositional bias: basic and acidic residues; that stretch reads DHPHGGGEGRH. Basic residues predominate over residues 264–284; sequence KGLKTRDKRKSNKWIVKDRRK.

It belongs to the universal ribosomal protein uL2 family. Part of the 50S ribosomal subunit. Forms a bridge to the 30S subunit in the 70S ribosome.

One of the primary rRNA binding proteins. Required for association of the 30S and 50S subunits to form the 70S ribosome, for tRNA binding and peptide bond formation. It has been suggested to have peptidyltransferase activity; this is somewhat controversial. Makes several contacts with the 16S rRNA in the 70S ribosome. The protein is Large ribosomal subunit protein uL2 of Chlamydia felis (strain Fe/C-56) (Chlamydophila felis).